Here is an 878-residue protein sequence, read N- to C-terminus: Leucine--tRNA ligase (878 aa).

Positions 56–66 (PYPSGKLHMGH) match the 'HIGH' region motif. Positions 630–634 (KMSKS) match the 'KMSKS' region motif. K633 is an ATP binding site.

Belongs to the class-I aminoacyl-tRNA synthetase family.

It localises to the cytoplasm. It catalyses the reaction tRNA(Leu) + L-leucine + ATP = L-leucyl-tRNA(Leu) + AMP + diphosphate. This is Leucine--tRNA ligase from Prochlorococcus marinus (strain MIT 9313).